The sequence spans 121 residues: Large ribosomal subunit protein bL17 (121 aa).

It belongs to the bacterial ribosomal protein bL17 family. In terms of assembly, part of the 50S ribosomal subunit. Contacts protein L32.

This is Large ribosomal subunit protein bL17 from Sulfurihydrogenibium sp. (strain YO3AOP1).